Reading from the N-terminus, the 386-residue chain is DNA (cytosine-5)-methyltransferase 3-like (386 aa).

In terms of domain architecture, ADD spans 41-173; that stretch reads EVKANQRNIE…LKAFYDRESE (133 aa). The GATA-type; atypical zinc-finger motif lies at 52–82; that stretch reads ICICCGSLQVHTQHPLFEGGICAPCKDKFLD. A PHD-type; atypical zinc finger spans residues 93 to 149; the sequence is QSYCSICCSGETLLICGNPDCTRCYCFECVDSLVGPGTSGKVHAMSNWVCYLCLPSS.

In terms of assembly, homodimer. Heterotetramer composed of 1 DNMT3A homodimer and 2 DNMT3L subunits (DNMT3L-DNMT3A-DNMT3A-DNMT3L). Interacts with histone H3 (via N-terminus); interaction is strongly inhibited by methylation at lysine 4 (H3K4me). Interacts with EZH2; the interaction is direct. Interacts with SPOCD1. In terms of tissue distribution, expressed at low levels in several tissues including testis, ovary, and thymus.

It localises to the nucleus. Functionally, catalytically inactive regulatory factor of DNA methyltransferases that can either promote or inhibit DNA methylation depending on the context. Essential for the function of DNMT3A and DNMT3B: activates DNMT3A and DNMT3B by binding to their catalytic domain. Acts by accelerating the binding of DNA and S-adenosyl-L-methionine (AdoMet) to the methyltransferases and dissociates from the complex after DNA binding to the methyltransferases. Recognizes unmethylated histone H3 lysine 4 (H3K4me0) and induces de novo DNA methylation by recruitment or activation of DNMT3. Plays a key role in embryonic stem cells and germ cells. In germ cells, required for the methylation of imprinted loci together with DNMT3A. In male germ cells, specifically required to methylate retrotransposons, preventing their mobilization. Plays a key role in embryonic stem cells (ESCs) by acting both as an positive and negative regulator of DNA methylation. While it promotes DNA methylation of housekeeping genes together with DNMT3A and DNMT3B, it also acts as an inhibitor of DNA methylation at the promoter of bivalent genes. Interacts with the EZH2 component of the PRC2/EED-EZH2 complex, preventing interaction of DNMT3A and DNMT3B with the PRC2/EED-EZH2 complex, leading to maintain low methylation levels at the promoters of bivalent genes. Promotes differentiation of ESCs into primordial germ cells by inhibiting DNA methylation at the promoter of RHOX5, thereby activating its expression. The sequence is that of DNA (cytosine-5)-methyltransferase 3-like (DNMT3L) from Homo sapiens (Human).